Here is a 239-residue protein sequence, read N- to C-terminus: Uridylate kinase (239 aa).

13 to 16 (KVSG) provides a ligand contact to ATP. Glycine 55 contacts UMP. Residues glycine 56 and arginine 60 each contribute to the ATP site. Residues aspartate 75 and 136–143 (TGNPFFTT) contribute to the UMP site. Positions 163, 164, 169, and 172 each coordinate ATP.

The protein belongs to the UMP kinase family. Homohexamer.

It is found in the cytoplasm. It carries out the reaction UMP + ATP = UDP + ADP. It participates in pyrimidine metabolism; CTP biosynthesis via de novo pathway; UDP from UMP (UMPK route): step 1/1. With respect to regulation, inhibited by UTP. In terms of biological role, catalyzes the reversible phosphorylation of UMP to UDP. The protein is Uridylate kinase of Bartonella bacilliformis (strain ATCC 35685 / KC583 / Herrer 020/F12,63).